Consider the following 405-residue polypeptide: 3-hydroxy-3-methylglutaryl-coenzyme A reductase (405 aa).

Catalysis depends on charge relay system residues E101 and D305. H400 (proton donor) is an active-site residue.

It belongs to the HMG-CoA reductase family. Homodimer.

Its subcellular location is the cytoplasm. It catalyses the reaction (R)-mevalonate + 2 NADP(+) + CoA = (3S)-3-hydroxy-3-methylglutaryl-CoA + 2 NADPH + 2 H(+). It participates in metabolic intermediate biosynthesis; (R)-mevalonate biosynthesis; (R)-mevalonate from acetyl-CoA: step 3/3. Is competitively inhibited by lovastatin (formerly called mevinolin). Lovastatin also blocks the growth of H.salinarum, and this effect is reversed by addition of mevalonate, indicating the critical role that the mevalonate pathway plays in isoprenoid biosynthesis by these archaea. Functionally, catalyzes the NADPH-dependent reductive deacylation of (S)-3-hydroxy-3-methylglutaryl-CoA (HMG-CoA) to (R)-mevalonate. Cannot use NADH instead of NADPH. Functions in the mevalonate (MVA) pathway leading to isopentenyl diphosphate (IPP), a key precursor for the biosynthesis of isoprenoid compounds such as archaeal membrane lipids. In Halobacterium salinarum (strain ATCC 29341 / DSM 671 / R1), this protein is 3-hydroxy-3-methylglutaryl-coenzyme A reductase (hmgA).